A 467-amino-acid polypeptide reads, in one-letter code: Dihydrolipoyl dehydrogenase (467 aa).

FAD-binding positions include 33-41, lysine 50, and glycine 113; that span reads EPKYWGGIC. Cysteine 41 and cysteine 46 form a disulfide bridge. Residues 181–185, glutamate 204, and 269–272 contribute to the NAD(+) site; these read GAGAI and AIGF. Positions 312 and 320 each coordinate FAD. The Proton acceptor role is filled by histidine 446.

The protein belongs to the class-I pyridine nucleotide-disulfide oxidoreductase family. Homodimer. Part of the PDH complex, consisting of multiple copies of AceE (E1), DlaT (E2) and Lpd (E3), and of the BCKADH complex, consisting of multiple copies of BkdA/BkdB (E1), BkdC (E2) and Lpd (E3). The cofactor is FAD.

The protein localises to the cytoplasm. It catalyses the reaction N(6)-[(R)-dihydrolipoyl]-L-lysyl-[protein] + NAD(+) = N(6)-[(R)-lipoyl]-L-lysyl-[protein] + NADH + H(+). Its function is as follows. Lipoamide dehydrogenase is a component of the alpha-ketoacid dehydrogenase complexes. Catalyzes the reoxidation of dihydrolipoyl groups which are covalently attached to the lipoate acyltransferase components (E2) of the complexes. The chain is Dihydrolipoyl dehydrogenase (lpd) from Mycobacterium leprae (strain TN).